A 125-amino-acid chain; its full sequence is Large ribosomal subunit protein bL12 (125 aa).

The segment at 95 to 125 (APKPIKEGVDKKTAEEAKKKLEEAGAKAELK) is disordered.

It belongs to the bacterial ribosomal protein bL12 family. As to quaternary structure, homodimer. Part of the ribosomal stalk of the 50S ribosomal subunit. Forms a multimeric L10(L12)X complex, where L10 forms an elongated spine to which 2 to 4 L12 dimers bind in a sequential fashion. Binds GTP-bound translation factors.

In terms of biological role, forms part of the ribosomal stalk which helps the ribosome interact with GTP-bound translation factors. Is thus essential for accurate translation. The chain is Large ribosomal subunit protein bL12 from Polynucleobacter necessarius subsp. necessarius (strain STIR1).